The following is a 133-amino-acid chain: Small ribosomal subunit protein uS8 (133 aa).

It belongs to the universal ribosomal protein uS8 family. In terms of assembly, part of the 30S ribosomal subunit. Contacts proteins S5 and S12.

One of the primary rRNA binding proteins, it binds directly to 16S rRNA central domain where it helps coordinate assembly of the platform of the 30S subunit. This Thermosynechococcus vestitus (strain NIES-2133 / IAM M-273 / BP-1) protein is Small ribosomal subunit protein uS8.